We begin with the raw amino-acid sequence, 533 residues long: CTP synthase (533 aa).

The amidoligase domain stretch occupies residues 1–265 (MTKFIFVTGG…PAYLARRLGL (265 aa)). Ser-13 provides a ligand contact to CTP. Ser-13 contributes to the UTP binding site. ATP is bound at residue 14-19 (GLGKGI). Position 54 (Tyr-54) interacts with L-glutamine. Asp-71 is an ATP binding site. The Mg(2+) site is built by Asp-71 and Glu-139. CTP contacts are provided by residues 146 to 148 (DIE), 186 to 191 (KTKPTQ), and Lys-222. Residues 186–191 (KTKPTQ) and Lys-222 each bind UTP. The Glutamine amidotransferase type-1 domain occupies 290 to 532 (EIAIVGKYVK…VEAAKKKKYG (243 aa)). Gly-351 is a binding site for L-glutamine. Cys-378 (nucleophile; for glutamine hydrolysis) is an active-site residue. Residues 379–382 (FGFQ), Glu-402, and Arg-459 each bind L-glutamine. Active-site residues include His-505 and Glu-507.

Belongs to the CTP synthase family. As to quaternary structure, homotetramer.

The catalysed reaction is UTP + L-glutamine + ATP + H2O = CTP + L-glutamate + ADP + phosphate + 2 H(+). The enzyme catalyses L-glutamine + H2O = L-glutamate + NH4(+). It catalyses the reaction UTP + NH4(+) + ATP = CTP + ADP + phosphate + 2 H(+). The protein operates within pyrimidine metabolism; CTP biosynthesis via de novo pathway; CTP from UDP: step 2/2. With respect to regulation, allosterically activated by GTP, when glutamine is the substrate; GTP has no effect on the reaction when ammonia is the substrate. The allosteric effector GTP functions by stabilizing the protein conformation that binds the tetrahedral intermediate(s) formed during glutamine hydrolysis. Inhibited by the product CTP, via allosteric rather than competitive inhibition. Functionally, catalyzes the ATP-dependent amination of UTP to CTP with either L-glutamine or ammonia as the source of nitrogen. Regulates intracellular CTP levels through interactions with the four ribonucleotide triphosphates. The chain is CTP synthase from Thermococcus kodakarensis (strain ATCC BAA-918 / JCM 12380 / KOD1) (Pyrococcus kodakaraensis (strain KOD1)).